The sequence spans 108 residues: MSGPHPTGLHRLAETIAARKGADPETSWTAKLLAKGPEKCAEKFGEEAVEAIIEAVKGDRAKLISEAADTLYHLLVMLAARDVTLSDVENELDRREGRSGIEEKASRK.

The disordered stretch occupies residues 88–108 (VENELDRREGRSGIEEKASRK). Over residues 91 to 108 (ELDRREGRSGIEEKASRK) the composition is skewed to basic and acidic residues.

It belongs to the PRA-PH family.

It is found in the cytoplasm. The catalysed reaction is 1-(5-phospho-beta-D-ribosyl)-ATP + H2O = 1-(5-phospho-beta-D-ribosyl)-5'-AMP + diphosphate + H(+). Its pathway is amino-acid biosynthesis; L-histidine biosynthesis; L-histidine from 5-phospho-alpha-D-ribose 1-diphosphate: step 2/9. This is Phosphoribosyl-ATP pyrophosphatase from Paracoccus denitrificans (strain Pd 1222).